The following is a 342-amino-acid chain: Ribosomal RNA small subunit methyltransferase H (342 aa).

S-adenosyl-L-methionine contacts are provided by residues 43-45 (GGY), D61, F87, D108, and Q115. The segment at 322-342 (ALDEASDGMNLPPLAELEKSR) is disordered.

The protein belongs to the methyltransferase superfamily. RsmH family.

The protein resides in the cytoplasm. The catalysed reaction is cytidine(1402) in 16S rRNA + S-adenosyl-L-methionine = N(4)-methylcytidine(1402) in 16S rRNA + S-adenosyl-L-homocysteine + H(+). Its function is as follows. Specifically methylates the N4 position of cytidine in position 1402 (C1402) of 16S rRNA. This Hyphomonas neptunium (strain ATCC 15444) protein is Ribosomal RNA small subunit methyltransferase H.